A 213-amino-acid polypeptide reads, in one-letter code: Peptide methionine sulfoxide reductase MsrA (213 aa).

Cys52 is a catalytic residue.

The protein belongs to the MsrA Met sulfoxide reductase family.

It catalyses the reaction L-methionyl-[protein] + [thioredoxin]-disulfide + H2O = L-methionyl-(S)-S-oxide-[protein] + [thioredoxin]-dithiol. The catalysed reaction is [thioredoxin]-disulfide + L-methionine + H2O = L-methionine (S)-S-oxide + [thioredoxin]-dithiol. Its function is as follows. Has an important function as a repair enzyme for proteins that have been inactivated by oxidation. Catalyzes the reversible oxidation-reduction of methionine sulfoxide in proteins to methionine. In Enterobacter sp. (strain 638), this protein is Peptide methionine sulfoxide reductase MsrA.